Consider the following 477-residue polypeptide: Bifunctional protein HldE (477 aa).

Positions 1–318 are ribokinase; it reads MKVTLPEFER…ENAVRGRADT (318 aa). Lys179 carries the post-translational modification N6-acetyllysine. 195–198 lines the ATP pocket; that stretch reads NLSE. Asp264 is an active-site residue. The segment at 344–477 is cytidylyltransferase; the sequence is MTNGVFDILH…IKKIQQDKKG (134 aa).

The protein in the N-terminal section; belongs to the carbohydrate kinase PfkB family. It in the C-terminal section; belongs to the cytidylyltransferase family. Homodimer.

It catalyses the reaction D-glycero-beta-D-manno-heptose 7-phosphate + ATP = D-glycero-beta-D-manno-heptose 1,7-bisphosphate + ADP + H(+). The catalysed reaction is D-glycero-beta-D-manno-heptose 1-phosphate + ATP + H(+) = ADP-D-glycero-beta-D-manno-heptose + diphosphate. Its pathway is nucleotide-sugar biosynthesis; ADP-L-glycero-beta-D-manno-heptose biosynthesis; ADP-L-glycero-beta-D-manno-heptose from D-glycero-beta-D-manno-heptose 7-phosphate: step 1/4. It functions in the pathway nucleotide-sugar biosynthesis; ADP-L-glycero-beta-D-manno-heptose biosynthesis; ADP-L-glycero-beta-D-manno-heptose from D-glycero-beta-D-manno-heptose 7-phosphate: step 3/4. Functionally, catalyzes the phosphorylation of D-glycero-D-manno-heptose 7-phosphate at the C-1 position to selectively form D-glycero-beta-D-manno-heptose-1,7-bisphosphate. In terms of biological role, catalyzes the ADP transfer from ATP to D-glycero-beta-D-manno-heptose 1-phosphate, yielding ADP-D-glycero-beta-D-manno-heptose. This chain is Bifunctional protein HldE, found in Shigella sonnei (strain Ss046).